We begin with the raw amino-acid sequence, 201 residues long: Imidazole glycerol phosphate synthase subunit HisH 1 (201 aa).

Residues 1-201 form the Glutamine amidotransferase type-1 domain; the sequence is MIALIDYKAG…LKLLENFIRL (201 aa). C80 acts as the Nucleophile in catalysis. Active-site residues include H183 and E185.

In terms of assembly, heterodimer of HisH and HisF.

Its subcellular location is the cytoplasm. It carries out the reaction 5-[(5-phospho-1-deoxy-D-ribulos-1-ylimino)methylamino]-1-(5-phospho-beta-D-ribosyl)imidazole-4-carboxamide + L-glutamine = D-erythro-1-(imidazol-4-yl)glycerol 3-phosphate + 5-amino-1-(5-phospho-beta-D-ribosyl)imidazole-4-carboxamide + L-glutamate + H(+). It catalyses the reaction L-glutamine + H2O = L-glutamate + NH4(+). It functions in the pathway amino-acid biosynthesis; L-histidine biosynthesis; L-histidine from 5-phospho-alpha-D-ribose 1-diphosphate: step 5/9. Its function is as follows. IGPS catalyzes the conversion of PRFAR and glutamine to IGP, AICAR and glutamate. The HisH subunit provides the glutamine amidotransferase activity that produces the ammonia necessary to HisF for the synthesis of IGP and AICAR. The polypeptide is Imidazole glycerol phosphate synthase subunit HisH 1 (Campylobacter jejuni (strain RM1221)).